A 97-amino-acid chain; its full sequence is Putative septation protein SpoVG (97 aa).

The protein belongs to the SpoVG family.

Functionally, could be involved in septation. This is Putative septation protein SpoVG from Borreliella afzelii (strain PKo) (Borrelia afzelii).